A 196-amino-acid chain; its full sequence is Orotate phosphoribosyltransferase (196 aa).

A 5-phospho-alpha-D-ribose 1-diphosphate-binding site is contributed by 117-125 (EDIVTTGLS). Orotate contacts are provided by T121 and R149.

This sequence belongs to the purine/pyrimidine phosphoribosyltransferase family. PyrE subfamily. As to quaternary structure, homodimer. Mg(2+) is required as a cofactor.

The enzyme catalyses orotidine 5'-phosphate + diphosphate = orotate + 5-phospho-alpha-D-ribose 1-diphosphate. It participates in pyrimidine metabolism; UMP biosynthesis via de novo pathway; UMP from orotate: step 1/2. Catalyzes the transfer of a ribosyl phosphate group from 5-phosphoribose 1-diphosphate to orotate, leading to the formation of orotidine monophosphate (OMP). The chain is Orotate phosphoribosyltransferase from Methylorubrum populi (strain ATCC BAA-705 / NCIMB 13946 / BJ001) (Methylobacterium populi).